The chain runs to 960 residues: Vacuolar membrane protease (960 aa).

Topologically, residues 1-57 (MADNNSSSGSLVIDEQDYDVHEAGQQGQQGQQKHQQRQQERPSLITRVFRSVFGYRK) are cytoplasmic. Residues 22–41 (EAGQQGQQGQQKHQQRQQER) form a disordered region. The segment covering 24–33 (GQQGQQGQQK) has biased composition (low complexity). The helical transmembrane segment at 58 to 78 (TSLSLFVVATIALCVSLSYID) threads the bilayer. Residues 79–401 (NSVDFISFPT…FTISTSQLFK (323 aa)) are Vacuolar-facing. Asn148 carries an N-linked (GlcNAc...) asparagine glycan. Zn(2+) is bound by residues His189 and Asp201. Glu235 acts as the Proton acceptor in catalysis. Glu236, Glu261, and His333 together coordinate Zn(2+). A helical transmembrane segment spans residues 402–422 (INVALLTVFPILNGLLLLYTI). At 423 to 432 (RSRKWQVSFS) the chain is on the cytoplasmic side. Residues 433-453 (SAISIPVALLVTMFIVVYLVV) form a helical membrane-spanning segment. The Vacuolar portion of the chain corresponds to 454-476 (ESYKSFNQYLPSSRPLLLVATIT). The helical transmembrane segment at 477–497 (SILLLVFSIILVAFSFFSIIA) threads the bilayer. Topologically, residues 498-502 (EENLR) are cytoplasmic. Residues 503-523 (LLAIVELSFAYWVGLAFTTHG) form a helical membrane-spanning segment. At 524–535 (LSGAESARHSGE) the chain is on the vacuolar side. A helical membrane pass occupies residues 536–556 (FAVSILFTLEAVASFLGLIGW). Topologically, residues 557–635 (SLCRNRSHLQ…FGYDWSLQYL (79 aa)) are cytoplasmic. Over residues 587-605 (NDHDHEHRHGHEDNEHGEA) the composition is skewed to basic and acidic residues. A disordered region spans residues 587-614 (NDHDHEHRHGHEDNEHGEAHVQQQSQSR). Residues 636–656 (ITVPLSIFIIYNSGWLVLEGV) form a helical membrane-spanning segment. Asn657 carries N-linked (GlcNAc...) asparagine glycosylation. The Vacuolar portion of the chain corresponds to 657–668 (NKTLQESAKAET). A helical transmembrane segment spans residues 669-689 (FVYNLLWIVSVSLVLPLIPFA). Topologically, residues 690–696 (GKLNRYM) are cytoplasmic. A helical membrane pass occupies residues 697–717 (VFVLIAIGVLGTLLVHVVQPF). Topologically, residues 718–960 (NEANPLKLRF…LVAYTKQVHV (243 aa)) are vacuolar. Residues Asn736, Asn763, Asn803, Asn875, and Asn921 are each glycosylated (N-linked (GlcNAc...) asparagine).

This sequence belongs to the peptidase M28 family. The cofactor is Zn(2+).

It is found in the vacuole membrane. May be involved in vacuolar sorting and osmoregulation. The polypeptide is Vacuolar membrane protease (Lodderomyces elongisporus (strain ATCC 11503 / CBS 2605 / JCM 1781 / NBRC 1676 / NRRL YB-4239) (Yeast)).